Reading from the N-terminus, the 135-residue chain is Small ribosomal subunit protein uS12 (135 aa).

Residues 1 to 20 (MPTINQLVRKGRHSKVTKSK) form a disordered region. Residues 9–18 (RKGRHSKVTK) show a composition bias toward basic residues.

This sequence belongs to the universal ribosomal protein uS12 family. Part of the 30S ribosomal subunit. Contacts proteins S8 and S17. May interact with IF1 in the 30S initiation complex.

Functionally, with S4 and S5 plays an important role in translational accuracy. Interacts with and stabilizes bases of the 16S rRNA that are involved in tRNA selection in the A site and with the mRNA backbone. Located at the interface of the 30S and 50S subunits, it traverses the body of the 30S subunit contacting proteins on the other side and probably holding the rRNA structure together. The combined cluster of proteins S8, S12 and S17 appears to hold together the shoulder and platform of the 30S subunit. This Lactobacillus acidophilus (strain ATCC 700396 / NCK56 / N2 / NCFM) protein is Small ribosomal subunit protein uS12.